A 242-amino-acid polypeptide reads, in one-letter code: Methylthioribulose-1-phosphate dehydratase (242 aa).

Residue cysteine 97 participates in substrate binding. The Zn(2+) site is built by histidine 115 and histidine 117. Glutamate 139 acts as the Proton donor/acceptor in catalysis. Histidine 195 contacts Zn(2+).

This sequence belongs to the aldolase class II family. MtnB subfamily. Homotetramer. Interacts with APAF1. May interact with CASP1. Zn(2+) is required as a cofactor.

Its subcellular location is the cytoplasm. The enzyme catalyses 5-(methylsulfanyl)-D-ribulose 1-phosphate = 5-methylsulfanyl-2,3-dioxopentyl phosphate + H2O. It functions in the pathway amino-acid biosynthesis; L-methionine biosynthesis via salvage pathway; L-methionine from S-methyl-5-thio-alpha-D-ribose 1-phosphate: step 2/6. Catalyzes the dehydration of methylthioribulose-1-phosphate (MTRu-1-P) into 2,3-diketo-5-methylthiopentyl-1-phosphate (DK-MTP-1-P). Functions in the methionine salvage pathway, which plays a key role in cancer, apoptosis, microbial proliferation and inflammation. May inhibit the CASP1-related inflammatory response (pyroptosis), the CASP9-dependent apoptotic pathway and the cytochrome c-dependent and APAF1-mediated cell death. The sequence is that of Methylthioribulose-1-phosphate dehydratase from Bos taurus (Bovine).